We begin with the raw amino-acid sequence, 505 residues long: 2,3-bisphosphoglycerate-independent phosphoglycerate mutase (505 aa).

Mn(2+) is bound by residues D12 and S62. Catalysis depends on S62, which acts as the Phosphoserine intermediate. Substrate contacts are provided by residues H123, 153–154 (RD), R185, R191, 257–260 (RPDR), and K330. D397, H401, D438, H439, and H456 together coordinate Mn(2+).

It belongs to the BPG-independent phosphoglycerate mutase family. As to quaternary structure, monomer. Mn(2+) is required as a cofactor.

The catalysed reaction is (2R)-2-phosphoglycerate = (2R)-3-phosphoglycerate. It functions in the pathway carbohydrate degradation; glycolysis; pyruvate from D-glyceraldehyde 3-phosphate: step 3/5. In terms of biological role, catalyzes the interconversion of 2-phosphoglycerate and 3-phosphoglycerate. This Staphylococcus haemolyticus (strain JCSC1435) protein is 2,3-bisphosphoglycerate-independent phosphoglycerate mutase.